The primary structure comprises 325 residues: Formimidoylglutamase (325 aa).

Mn(2+) contacts are provided by H125, D155, H157, D159, C246, and D248.

The protein belongs to the arginase family. Mn(2+) serves as cofactor.

The enzyme catalyses N-formimidoyl-L-glutamate + H2O = formamide + L-glutamate. It functions in the pathway amino-acid degradation; L-histidine degradation into L-glutamate; L-glutamate from N-formimidoyl-L-glutamate (hydrolase route): step 1/1. Catalyzes the conversion of N-formimidoyl-L-glutamate to L-glutamate and formamide. In Ralstonia nicotianae (strain ATCC BAA-1114 / GMI1000) (Ralstonia solanacearum), this protein is Formimidoylglutamase.